We begin with the raw amino-acid sequence, 314 residues long: UDP-glucose 4-epimerase (314 aa).

NAD(+) contacts are provided by residues 11 to 12 (FI), 31 to 36 (DNFATG), 56 to 57 (DI), and 77 to 81 (LAAQI). Residues S121 and Y146 each coordinate substrate. The NAD(+) site is built by Y146 and K150. The Proton acceptor role is filled by Y146. Substrate is bound by residues N175, 189 to 190 (VV), 204 to 206 (RVF), R213, and 271 to 274 (RLGD).

The protein belongs to the NAD(P)-dependent epimerase/dehydratase family. As to quaternary structure, homodimer. The cofactor is NAD(+).

The enzyme catalyses UDP-alpha-D-glucose = UDP-alpha-D-galactose. It functions in the pathway carbohydrate metabolism; galactose metabolism. Functionally, involved in the metabolism of galactose. Catalyzes the conversion of UDP-galactose (UDP-Gal) to UDP-glucose (UDP-Glc) through a mechanism involving the transient reduction of NAD. This chain is UDP-glucose 4-epimerase (galE1), found in Mycobacterium tuberculosis (strain CDC 1551 / Oshkosh).